The following is a 31-amino-acid chain: Cytochrome b6-f complex subunit 6 (31 aa).

A helical membrane pass occupies residues 4–26 (LTSYFGFLLAALTITSALFIGLS).

The protein belongs to the PetL family. As to quaternary structure, the 4 large subunits of the cytochrome b6-f complex are cytochrome b6, subunit IV (17 kDa polypeptide, PetD), cytochrome f and the Rieske protein, while the 4 small subunits are PetG, PetL, PetM and PetN. The complex functions as a dimer.

Its subcellular location is the plastid. It is found in the chloroplast thylakoid membrane. Functionally, component of the cytochrome b6-f complex, which mediates electron transfer between photosystem II (PSII) and photosystem I (PSI), cyclic electron flow around PSI, and state transitions. PetL is important for photoautotrophic growth as well as for electron transfer efficiency and stability of the cytochrome b6-f complex. The protein is Cytochrome b6-f complex subunit 6 of Aethionema cordifolium (Lebanon stonecress).